The chain runs to 182 residues: Capsid protein (182 aa).

The interval 136–182 (NAPILSTLPETTVVRRRRPSGRRTPSPRRRRSQSPRRRRSQSPASSC) is disordered. Basic residues predominate over residues 149 to 175 (VRRRRPSGRRTPSPRRRRSQSPRRRRS). The Bipartite nuclear localization signal signature appears at 157 to 174 (RRTPSPRRRRSQSPRRRR). Ser-161 and Ser-169 each carry phosphoserine; by host. Tandem repeats lie at residues 161 to 168 (SPRRRRSQ) and 169 to 176 (SPRRRRSQ). The segment at 161 to 176 (SPRRRRSQSPRRRRSQ) is 2 X 8 AA repeats of S-P-R-R-R-[PR]-S-Q. Residues 176 to 182 (QSPASSC) form an RNA binding region.

The protein belongs to the orthohepadnavirus core antigen family. In terms of assembly, homodimerizes, then multimerizes. Interacts with cytosol exposed regions of viral L glycoprotein present in the reticulum-to-Golgi compartment. Interacts with human FLNB. Phosphorylated form interacts with host importin alpha; this interaction depends on the exposure of the NLS, which itself depends upon genome maturation and/or phosphorylation of the capsid protein. Interacts with host NUP153. Phosphorylated by host SRPK1, SRPK2, and maybe protein kinase C or GAPDH. Phosphorylation is critical for pregenomic RNA packaging. Protein kinase C phosphorylation is stimulated by HBx protein and may play a role in transport of the viral genome to the nucleus at the late step during the viral replication cycle.

It is found in the virion. The protein resides in the host cytoplasm. In terms of biological role, self assembles to form an icosahedral capsid. Most capsids appear to be large particles with an icosahedral symmetry of T=4 and consist of 240 copies of capsid protein, though a fraction forms smaller T=3 particles consisting of 180 capsid proteins. Entering capsids are transported along microtubules to the nucleus. Phosphorylation of the capsid is thought to induce exposure of nuclear localization signal in the C-terminal portion of the capsid protein that allows binding to the nuclear pore complex via the importin (karyopherin-) alpha and beta. Capsids are imported in intact form through the nuclear pore into the nuclear basket, where it probably binds NUP153. Only capsids that contain the mature viral genome can release the viral DNA and capsid protein into the nucleoplasm. Immature capsids get stuck in the basket. Capsids encapsulate the pre-genomic RNA and the P protein. Pre-genomic RNA is reverse-transcribed into DNA while the capsid is still in the cytoplasm. The capsid can then either be directed to the nucleus, providing more genomes for transcription, or bud through the endoplasmic reticulum to provide new virions. The polypeptide is Capsid protein (Woolly monkey hepatitis B virus (isolate Louisville) (WMHBV)).